Reading from the N-terminus, the 261-residue chain is Tyrosine phosphatase-like protein H5 (261 aa).

The Tyrosine-protein phosphatase domain occupies 26–261; it reads LIKKEHDKVL…ESVEQEYFVP (236 aa).

The protein belongs to the protein-tyrosine phosphatase family.

This chain is Tyrosine phosphatase-like protein H5 (H6), found in Microplitis demolitor bracovirus (isolate Webb) (MdBV).